The primary structure comprises 195 residues: 7-methyl-GTP pyrophosphatase (195 aa).

D70 serves as the catalytic Proton acceptor.

Belongs to the Maf family. YceF subfamily. It depends on a divalent metal cation as a cofactor.

Its subcellular location is the cytoplasm. The catalysed reaction is N(7)-methyl-GTP + H2O = N(7)-methyl-GMP + diphosphate + H(+). Its function is as follows. Nucleoside triphosphate pyrophosphatase that hydrolyzes 7-methyl-GTP (m(7)GTP). May have a dual role in cell division arrest and in preventing the incorporation of modified nucleotides into cellular nucleic acids. The sequence is that of 7-methyl-GTP pyrophosphatase from Shewanella sp. (strain MR-7).